The sequence spans 242 residues: Zinc import ATP-binding protein ZnuC (242 aa).

Residues isoleucine 24–tyrosine 241 enclose the ABC transporter domain. Glycine 56 to threonine 63 provides a ligand contact to ATP.

The protein belongs to the ABC transporter superfamily. Zinc importer (TC 3.A.1.15.5) family. As to quaternary structure, the complex is composed of two ATP-binding proteins (ZnuC), two transmembrane proteins (ZnuB) and a solute-binding protein (ZnuA).

Its subcellular location is the cell inner membrane. It carries out the reaction Zn(2+)(out) + ATP(in) + H2O(in) = Zn(2+)(in) + ADP(in) + phosphate(in) + H(+)(in). In terms of biological role, part of the ABC transporter complex ZnuABC involved in zinc import. Responsible for energy coupling to the transport system. This chain is Zinc import ATP-binding protein ZnuC, found in Ehrlichia chaffeensis (strain ATCC CRL-10679 / Arkansas).